The sequence spans 101 residues: Small ribosomal subunit protein uS14 (101 aa).

This sequence belongs to the universal ribosomal protein uS14 family. In terms of assembly, part of the 30S ribosomal subunit. Contacts proteins S3 and S10.

Binds 16S rRNA, required for the assembly of 30S particles and may also be responsible for determining the conformation of the 16S rRNA at the A site. This Psychromonas ingrahamii (strain DSM 17664 / CCUG 51855 / 37) protein is Small ribosomal subunit protein uS14.